Reading from the N-terminus, the 231-residue chain is NAD(+) ADP-ribosyltransferase (231 aa).

The enzyme catalyses NAD(+) + (ADP-D-ribosyl)n-acceptor = nicotinamide + (ADP-D-ribosyl)n+1-acceptor + H(+).. Its activity is regulated as follows. Activity increases up to 5-6 times with Mg(2+) at 50 uM or higher ion concentration. 3-aminobenzamide (3-ABA) inhibits the activity by up to half and nicotinamide to a lesser extent. Zn(2+) inhibits the activity to half-maximal rate but at 500 uM concentration of the ion. Functionally, catalyzes auto- and hetero-ADP ribosylation and produces short oligomers by elongating the ADP-ribose chain (up to 6-mer). Binds DNA non-specifically but with high affinity. Forms very stable complexes with circular DNA wherein the circular DNA confers thermostability compared to linear DNA. This chain is NAD(+) ADP-ribosyltransferase, found in Saccharolobus solfataricus (Sulfolobus solfataricus).